Reading from the N-terminus, the 384-residue chain is tRNA-specific 2-thiouridylase MnmA (384 aa).

Residues 13-20 (GLSGGVDS) and Met-39 each bind ATP. The segment at 99–101 (NPD) is interaction with target base in tRNA. Cys-104 acts as the Nucleophile in catalysis. Cys-104 and Cys-215 are oxidised to a cystine. Gly-128 provides a ligand contact to ATP. Residues 165-167 (KDQ) form an interaction with tRNA region. Cys-215 (cysteine persulfide intermediate) is an active-site residue. The interval 333 to 334 (RY) is interaction with tRNA.

It belongs to the MnmA/TRMU family.

Its subcellular location is the cytoplasm. The catalysed reaction is S-sulfanyl-L-cysteinyl-[protein] + uridine(34) in tRNA + AH2 + ATP = 2-thiouridine(34) in tRNA + L-cysteinyl-[protein] + A + AMP + diphosphate + H(+). Functionally, catalyzes the 2-thiolation of uridine at the wobble position (U34) of tRNA, leading to the formation of s(2)U34. The sequence is that of tRNA-specific 2-thiouridylase MnmA from Albidiferax ferrireducens (strain ATCC BAA-621 / DSM 15236 / T118) (Rhodoferax ferrireducens).